Here is a 436-residue protein sequence, read N- to C-terminus: Chromosomal replication initiator protein DnaA (436 aa).

The interval 1 to 69 (MSIFTKIKKS…SELYEKETGI (69 aa)) is domain I, interacts with DnaA modulators. Positions 69-97 (IKPKIDIVTKEISHRPLTIEEIIEPTTPS) are domain II. Residues 98–311 (VLIPEYTFES…GMITKINAMS (214 aa)) are domain III, AAA+ region. Positions 142, 144, 145, and 146 each coordinate ATP. The tract at residues 312–436 (KILGISEITL…KNKIQIKKSE (125 aa)) is domain IV, binds dsDNA.

The protein belongs to the DnaA family. In terms of assembly, oligomerizes as a right-handed, spiral filament on DNA at oriC.

It is found in the cytoplasm. In terms of biological role, plays an essential role in the initiation and regulation of chromosomal replication. ATP-DnaA binds to the origin of replication (oriC) to initiate formation of the DNA replication initiation complex once per cell cycle. Binds the DnaA box (a 9 base pair repeat at the origin) and separates the double-stranded (ds)DNA. Forms a right-handed helical filament on oriC DNA; dsDNA binds to the exterior of the filament while single-stranded (ss)DNA is stabiized in the filament's interior. The ATP-DnaA-oriC complex binds and stabilizes one strand of the AT-rich DNA unwinding element (DUE), permitting loading of DNA polymerase. After initiation quickly degrades to an ADP-DnaA complex that is not apt for DNA replication. Binds acidic phospholipids. This Nautilia profundicola (strain ATCC BAA-1463 / DSM 18972 / AmH) protein is Chromosomal replication initiator protein DnaA.